Consider the following 1487-residue polypeptide: Collagen alpha-1(II) chain (1487 aa).

Residues 1–25 form the signal peptide; sequence MIRLGAPQTLVLLTLLVAAVLRCQG. Positions 26 to 181 are cleaved as a propeptide — N-terminal propeptide; the sequence is QDVQEAGSCV…PPGLGGNFAA (156 aa). Residues 32–90 enclose the VWFC domain; sequence GSCVQDGQRYNDKDVWKPEPCRICVCDTGTVLCDDIICEDVKDCLSPEIPFGECCPICP. The interval 97-1237 is disordered; it reads SGQPGPKGQK…PREKGPDPLQ (1141 aa). Composition is skewed to basic and acidic residues over residues 105–116 and 133–154; these read QKGEPGDIKDIV and PRGD…RDGE. Pro residues predominate over residues 158-173; that stretch reads PGNPGPPGPPGPPGPP. Lys-190 bears the 5-hydroxylysine mark. Lys-190 is a glycosylation site (O-linked (Gal...) hydroxylysine). A triple-helical region region spans residues 201 to 1214; it reads GPMGPMGPRG…PGPPGPPGPP (1014 aa). The span at 208–217 shows a compositional bias: pro residues; that stretch reads PRGPPGPAGA. The span at 218-239 shows a compositional bias: low complexity; that stretch reads PGPQGFQGNPGEPGEPGVSGPM. The span at 241-250 shows a compositional bias: pro residues; sequence PRGPPGPPGK. The segment covering 251–265 has biased composition (basic and acidic residues); the sequence is PGDDGEAGKPGKAGE. 5-hydroxylysine is present on residues Lys-287, Lys-299, and Lys-308. Residues Lys-287, Lys-299, and Lys-308 are each glycosylated (O-linked (Gal...) hydroxylysine). Composition is skewed to low complexity over residues 310–320 and 335–350; these read ESGSPGENGSP and TGPA…DGQP. Positions 360–369 are enriched in gly residues; it reads GPAGGPGFPG. 2 stretches are compositionally biased toward low complexity: residues 370 to 382 and 391 to 431; these read APGA…PTGA and PRGE…AGAP. 5-hydroxylysine is present on Lys-374. Lys-374 is a glycosylation site (O-linked (Gal...) hydroxylysine). Pro residues predominate over residues 433-442; that stretch reads FPGPRGPPGP. Residues Lys-608 and Lys-620 each carry the 5-hydroxylysine modification. Residues Lys-608 and Lys-620 are each glycosylated (O-linked (Gal...) hydroxylysine). 2 stretches are compositionally biased toward low complexity: residues 622-631 and 656-667; these read LPGAPGLRGL and QGAPGPSGFQGL. A 4-hydroxyproline mark is found at Pro-659 and Pro-668. At Pro-670 the chain carries 3-hydroxyproline. 4-hydroxyproline is present on residues Pro-671 and Pro-674. Positions 764–775 are enriched in basic and acidic residues; the sequence is KGDRGDVGEKGP. Composition is skewed to low complexity over residues 833-848 and 877-913; these read AGFA…PGAK and PTGV…SNGN. Pro-907 is modified (3-hydroxyproline). A 4-hydroxyproline mark is found at Pro-908, Pro-914, and Pro-920. Residues 1069–1079 show a composition bias toward pro residues; it reads APGPPGSPGPA. A compositionally biased stretch (basic and acidic residues) spans 1115-1129; it reads RGDKGEAGEPGERGL. Position 1130 is a 5-hydroxylysine (Lys-1130). O-linked (Gal...) hydroxylysine glycosylation occurs at Lys-1130. Pro-1144 bears the 3-hydroxyproline mark. Over residues 1148-1157 the composition is skewed to low complexity; it reads SGDQGASGPA. 4-hydroxyproline is present on Pro-1181. 3-hydroxyproline is present on Pro-1186. Pro-1187 is subject to 4-hydroxyproline. Residues 1199-1216 show a composition bias toward pro residues; that stretch reads AGPPGNPGPPGPPGPPGP. Pro-1201 carries the post-translational modification 3-hydroxyproline. A 4-hydroxyproline mark is found at Pro-1202 and Pro-1205. A 3-hydroxyproline modification is found at Pro-1207. 4-hydroxyproline occurs at positions 1208 and 1211. Pro-1213 is subject to 3-hydroxyproline. Pro-1214 is subject to 4-hydroxyproline. Positions 1215 to 1241 are nonhelical region (C-terminal); the sequence is GPGIDMSAFAGLGPREKGPDPLQYMRA. The Fibrillar collagen NC1 domain maps to 1253–1487; sequence AEVDATLKSL…GVDIGPVCFL (235 aa). Disulfide bonds link Cys-1283/Cys-1315, Cys-1323/Cys-1485, and Cys-1393/Cys-1438. Ca(2+) contacts are provided by Asp-1301, Asn-1303, Gln-1304, Cys-1306, and Asp-1309. Residue Asn-1388 is glycosylated (N-linked (GlcNAc...) asparagine).

Belongs to the fibrillar collagen family. As to quaternary structure, homotrimers of alpha 1(II) chains. In terms of processing, the N-telopeptide is covalently linked to the helical COL2 region of alpha 1(IX), alpha 2(IX) and alpha 3(IX) chain. The C-telopeptide is covalently linked to an another site in the helical region of alpha 3(IX) COL2. Contains mostly 4-hydroxyproline. Prolines at the third position of the tripeptide repeating unit (G-X-P) are 4-hydroxylated in some or all of the chains. Post-translationally, contains 3-hydroxyproline at a few sites. This modification occurs on the first proline residue in the sequence motif Gly-Pro-Hyp, where Hyp is 4-hydroxyproline. In terms of processing, lysine residues at the third position of the tripeptide repeating unit (G-X-Y) are 5-hydroxylated in some or all of the chains. O-glycosylated on hydroxylated lysine residues. The O-linked glycan consists of a Glc-Gal disaccharide. In terms of tissue distribution, isoform 2 is highly expressed in juvenile chondrocyte and low in fetal chondrocyte.

The protein localises to the secreted. The protein resides in the extracellular space. Its subcellular location is the extracellular matrix. In terms of biological role, type II collagen is specific for cartilaginous tissues. It is essential for the normal embryonic development of the skeleton, for linear growth and for the ability of cartilage to resist compressive forces. This chain is Collagen alpha-1(II) chain, found in Homo sapiens (Human).